A 440-amino-acid chain; its full sequence is 23S rRNA (uracil(1939)-C(5))-methyltransferase RlmD (440 aa).

The TRAM domain maps to 11–69; it reads STLDTKHQPVTIERLDHQGSGLAFLHKKPLFVDGALPGEEVLIQLTENKSKYARGQLIK. The [4Fe-4S] cluster site is built by Cys-82, Cys-88, Cys-91, and Cys-169. The S-adenosyl-L-methionine site is built by Gln-272, Phe-301, Asn-306, Glu-322, Asn-349, and Asp-370. The Nucleophile role is filled by Cys-396.

The protein belongs to the class I-like SAM-binding methyltransferase superfamily. RNA M5U methyltransferase family. RlmD subfamily.

The catalysed reaction is uridine(1939) in 23S rRNA + S-adenosyl-L-methionine = 5-methyluridine(1939) in 23S rRNA + S-adenosyl-L-homocysteine + H(+). Functionally, catalyzes the formation of 5-methyl-uridine at position 1939 (m5U1939) in 23S rRNA. The protein is 23S rRNA (uracil(1939)-C(5))-methyltransferase RlmD of Vibrio cholerae serotype O1 (strain M66-2).